A 292-amino-acid polypeptide reads, in one-letter code: uncharacterized protein (292 aa).

2 disordered regions span residues 29 to 50 and 166 to 292; these read SEKP…LRDS and VKRK…EELK. S50 is modified (phosphoserine). Composition is skewed to polar residues over residues 176-189 and 208-217; these read NSKN…PVNN and GSPTNFSKLI. Residues 221–239 show a composition bias toward basic and acidic residues; sequence YKDEWLQQQKADSDRRTPK. 2 stretches are compositionally biased toward polar residues: residues 240-250 and 260-270; these read TSEASVSTQST and DTETPQNSETP.

Phosphorylated upon DNA damage.

This is an uncharacterized protein from Rattus norvegicus (Rat).